The primary structure comprises 1122 residues: MNVDNVNKGTHTRSKASRVIPSDLIEQEVSLESCPLSRKRKLQESEQENPLSKRKSHPLKLALDEGFNVDSNGSEETEMKERDSGTEESEATLEEIEEDSEPTKPKEAPSPQTAEAESSDKVEPEETETKTESSPPAKATYSSYHEIIANSLLNLGQVAKEALVSEGHLKESELNNEKPTSVKSGQAEIEQLMVEEACEKEIIIQTEDAEEVIEVTSEPISESGTEPRDEVNCEDTEKLQKDMIDEEEEEEDDDVDEEDDDDLEEDEEEEEEHSSEMANQDLPHASQDSPKPHCEGHFSPKPEYSVIVEVRSDDDKDDDSHSQKSAVTDESEMYDMMTRGNLGLLEQAIALKAEQVKVVREPSRSSLDNMKNFSADEKQNRPIDTMRKSFYDAGRPEKRDIKCPTPGCDGTGHVTGLYPHHRSLSGCPHKDRIPPEILAMHENVLKCPTPGCTGQGHVNSNRNTHRSLSGCPIAAAEKLTRSHEKQQQPGDLSKSSSNSDRILRPMCFVKQLEIPQYGSYRPNMAPATPRANLAKELEKYSKVTFDYASFDAQVFGKRLLAPKIPSSETSPKAFKSKPFPKASSPCHSPSSSYIKSTSSSSSSGFDYTHDAEAAHMAATAILNLSTRCWEMPENLSTKQQDTPSKSSEIEVDENGTLDLSMNKHRKRESTFPSSSSCSSSPSMKSPDQSQRQNCTSATSSNMTSPHSSQTSRQDDWDGPIDYTKPNRQREEEPEEMEPAAASFASSEVDEQEMQEMQEMQEMQEESYEDRKYPGDVTLTNFKLKFLSKDSKKELLSCPTPGCDGSGHITGNYASHRSLSGCPLADKSLRNLMAAHSADLKCPTPGCDGSGHITGNYASHRSLSGCPRAKKSGLKITPTKDDKDDPDLMKCPVPGCDGLGHISGKYASHRSASGCPLAARRQKEGALNGSAFSWKSLKTEGPSCPTPGCDGSGHANGSFLTHRSLSGCPRASFAGKKGKISGDELLGTNFKTSDVLENDEEIKQLNKEINELNESNSEMEADMVNLQSQITTMEKNLKNIEEENKVIEEQNEALFVELSGLSQALIRSLTNIRLPQMEPISEQNFDAYVNTLTDMYTNQECYQNPENKALLESIKQAVKGIKV.

Disordered stretches follow at residues 1–139 (MNVD…PAKA) and 208–334 (DAEE…SEMY). Acidic residues predominate over residues 86–100 (TEESEATLEEIEEDS). Composition is skewed to basic and acidic residues over residues 118–131 (SSDK…ETKT) and 225–243 (TEPR…QKDM). A compositionally biased stretch (acidic residues) spans 244-273 (IDEEEEEEDDDVDEEDDDDLEEDEEEEEEH). 2 stretches are compositionally biased toward basic and acidic residues: residues 290–300 (PKPHCEGHFSP) and 310–322 (VRSD…DSHS). 2 consecutive CCHHC-type zinc fingers follow at residues 394–437 (GRPE…PPEI) and 438–481 (LAMH…KLTR). Positions 403, 408, 421, 427, 447, 452, 465, and 471 each coordinate Zn(2+). Disordered regions lie at residues 479–499 (LTRS…SSNS), 566–595 (SSET…SYIK), and 634–770 (NLST…YEDR). Positions 487–499 (QQPGDLSKSSSNS) are enriched in polar residues. Residues 570-595 (SPKAFKSKPFPKASSPCHSPSSSYIK) show a composition bias toward low complexity. Residues 634-646 (NLSTKQQDTPSKS) are compositionally biased toward polar residues. Positions 670–689 (TFPSSSSCSSSPSMKSPDQS) are enriched in low complexity. Residues 690-711 (QRQNCTSATSSNMTSPHSSQTS) are compositionally biased toward polar residues. 4 consecutive CCHHC-type zinc fingers follow at residues 788–831 (KDSK…LRNL), 832–875 (MAAH…GLKI), 881–924 (DKDD…QKEG), and 934–977 (KSLK…GKKG). The Zn(2+) site is built by Cys797, Cys802, His815, Cys821, Cys841, Cys846, His859, Cys865, Cys890, Cys895, His908, Cys914, Cys943, Cys948, His961, and Cys967.

This sequence belongs to the MYT1 family.

The protein resides in the nucleus. Its function is as follows. Transcriptional activator which is essential for neuronal differentiation. Can promote ectotopic neuronal differentiation and confers insensitivity to lateral inhibition, but only in cooperation with bHLH transcription factors. This is Myelin transcription factor 1 (myt1) from Xenopus laevis (African clawed frog).